Here is a 276-residue protein sequence, read N- to C-terminus: Diaminopimelate epimerase (276 aa).

3 residues coordinate substrate: Asn13, Gln46, and Asn66. The active-site Proton donor is Cys75. Substrate is bound by residues 76 to 77, Asn159, Asn192, and 210 to 211; these read GN and ER. Residue Cys219 is the Proton acceptor of the active site. A substrate-binding site is contributed by 220-221; that stretch reads GT.

The protein belongs to the diaminopimelate epimerase family. In terms of assembly, homodimer.

It is found in the cytoplasm. It catalyses the reaction (2S,6S)-2,6-diaminopimelate = meso-2,6-diaminopimelate. Its pathway is amino-acid biosynthesis; L-lysine biosynthesis via DAP pathway; DL-2,6-diaminopimelate from LL-2,6-diaminopimelate: step 1/1. Functionally, catalyzes the stereoinversion of LL-2,6-diaminopimelate (L,L-DAP) to meso-diaminopimelate (meso-DAP), a precursor of L-lysine and an essential component of the bacterial peptidoglycan. This Chromobacterium violaceum (strain ATCC 12472 / DSM 30191 / JCM 1249 / CCUG 213 / NBRC 12614 / NCIMB 9131 / NCTC 9757 / MK) protein is Diaminopimelate epimerase.